The following is a 238-amino-acid chain: Large ribosomal subunit protein uL1 (238 aa).

The protein belongs to the universal ribosomal protein uL1 family. As to quaternary structure, part of the 50S ribosomal subunit.

In terms of biological role, binds directly to 23S rRNA. The L1 stalk is quite mobile in the ribosome, and is involved in E site tRNA release. Protein L1 is also a translational repressor protein, it controls the translation of the L11 operon by binding to its mRNA. The protein is Large ribosomal subunit protein uL1 of Beutenbergia cavernae (strain ATCC BAA-8 / DSM 12333 / CCUG 43141 / JCM 11478 / NBRC 16432 / NCIMB 13614 / HKI 0122).